The following is a 118-amino-acid chain: Small ribosomal subunit protein uS13 (118 aa).

A disordered region spans residues 94–118 (GLPVRGQRTKTNARTRKGPRKPIKK).

It belongs to the universal ribosomal protein uS13 family. As to quaternary structure, part of the 30S ribosomal subunit. Forms a loose heterodimer with protein S19. Forms two bridges to the 50S subunit in the 70S ribosome.

Its function is as follows. Located at the top of the head of the 30S subunit, it contacts several helices of the 16S rRNA. In the 70S ribosome it contacts the 23S rRNA (bridge B1a) and protein L5 of the 50S subunit (bridge B1b), connecting the 2 subunits; these bridges are implicated in subunit movement. Contacts the tRNAs in the A and P-sites. The protein is Small ribosomal subunit protein uS13 of Haemophilus ducreyi (strain 35000HP / ATCC 700724).